The chain runs to 511 residues: Bifunctional purine biosynthesis protein PurH (511 aa).

One can recognise an MGS-like domain in the interval methionine 1–valine 145.

Belongs to the PurH family.

The enzyme catalyses (6R)-10-formyltetrahydrofolate + 5-amino-1-(5-phospho-beta-D-ribosyl)imidazole-4-carboxamide = 5-formamido-1-(5-phospho-D-ribosyl)imidazole-4-carboxamide + (6S)-5,6,7,8-tetrahydrofolate. It carries out the reaction IMP + H2O = 5-formamido-1-(5-phospho-D-ribosyl)imidazole-4-carboxamide. Its pathway is purine metabolism; IMP biosynthesis via de novo pathway; 5-formamido-1-(5-phospho-D-ribosyl)imidazole-4-carboxamide from 5-amino-1-(5-phospho-D-ribosyl)imidazole-4-carboxamide (10-formyl THF route): step 1/1. It functions in the pathway purine metabolism; IMP biosynthesis via de novo pathway; IMP from 5-formamido-1-(5-phospho-D-ribosyl)imidazole-4-carboxamide: step 1/1. The polypeptide is Bifunctional purine biosynthesis protein PurH (Bacillus cytotoxicus (strain DSM 22905 / CIP 110041 / 391-98 / NVH 391-98)).